Here is a 2034-residue protein sequence, read N- to C-terminus: Host cell factor 1 (2034 aa).

An N-acetylalanine modification is found at Ala2. Ser6 is modified (phosphoserine). 5 Kelch repeats span residues 44–89 (LIVV…GFVC), 93–140 (RLLV…RLGH), 148–194 (KCYL…ITYG), 217–265 (KLVI…TIGN), and 266–313 (KMYV…LMDT). Glycyl lysine isopeptide (Lys-Gly) (interchain with G-Cter in ubiquitin) cross-links involve residues Lys105, Lys163, and Lys244. Residue Lys282 forms a Glycyl lysine isopeptide (Lys-Gly) (interchain with G-Cter in SUMO2) linkage. Residue Lys288 is modified to N6-acetyllysine. A Glycyl lysine isopeptide (Lys-Gly) (interchain with G-Cter in ubiquitin) cross-link involves residue Lys363. One can recognise a Fibronectin type-III 1 domain in the interval 366-469 (PPARVQLVRA…TIQVLPTVPG (104 aa)). Positions 407–434 (ATATSPTPNPVPSVPANPPKSPAPAAAA) are disordered. Position 411 is a phosphoserine (Ser411). The span at 413–428 (TPNPVPSVPANPPKSP) shows a compositional bias: pro residues. Residues 500–550 (LVTMRPASQAGKAPVTVTSLPASVRMVVPTQSAQGTVIGSNPQMSGMAALA) form a required for interaction with OGT region. Arg504 and Arg524 each carry omega-N-methylarginine. Ser598, Ser666, and Ser669 each carry phosphoserine. The interval 610–722 (LKTAAAQVGT…KGPLPAGTIL (113 aa)) is interaction with SIN3A. Residues 750–902 (ILGISSVSPS…SLAGAGAHST (153 aa)) are interaction with ZBTB17. Lys813 is subject to N6-acetyllysine. The segment at 813–912 (KIITAVPKIA…SASLATPITT (100 aa)) is interaction with GABP2. 3 HCF repeat repeats span residues 1010 to 1035 (TLVC…TVVA), 1072 to 1097 (VRVC…ATSN), and 1101 to 1126 (QHGC…AMSS). An HCF repeat 4; degenerate repeat occupies 1156–1182 (RAQGTVKPPCQTQQTNMTSTTMTVQAT). Ser1204 and Ser1223 each carry phosphoserine. Disordered regions lie at residues 1221 to 1241 (GPSS…TYTT), 1302 to 1374 (PCET…TTST), 1444 to 1477 (TVTS…NITS), and 1491 to 1525 (RAVT…QLPP). 2 HCF repeat repeats span residues 1295–1320 (TQVC…SNAG) and 1323–1348 (QRVC…ATSN). Residues 1308-1321 (TGTTNTATTSNAGS) show a composition bias toward low complexity. An HCF repeat 7; degenerate repeat occupies 1358 to 1383 (QQPASGHPCETHQTTSTGTTMSVSVG). The stretch at 1423–1448 (QRVCSNPPCETHETGTTHTATTVTSN) is one HCF repeat 8 repeat. Positions 1491–1501 (RAVTTVTQSTP) are enriched in low complexity. Thr1500 carries the phosphothreonine modification. Residues 1502–1511 (VPGPSVPPPE) are compositionally biased toward pro residues. Residues Ser1506 and Ser1516 each carry the phosphoserine modification. Residues 1693–1723 (IVLTQQELAALVQQQQQLQEAQAQAQQQHHL) adopt a coiled-coil conformation. Ser1782 carries the post-translational modification Phosphoserine. 2 consecutive Fibronectin type-III domains span residues 1808–1899 (LPPP…TCLP) and 1901–2017 (FPGA…TSKD). Residues Lys1818 and Lys1819 each participate in a glycyl lysine isopeptide (Lys-Gly) (interchain with G-Cter in ubiquitin) cross-link. Ser1849 carries the phosphoserine modification. The interval 2005-2034 (ATQVRWLQETSKDSSGTKPASKRPMSSPEM) is disordered. Lys2016 is modified (N6-acetyllysine).

As to quaternary structure, composed predominantly of six polypeptides ranging from 110 to 150 kDa and a minor 300 kDa polypeptide. The majority of N- and C-terminal cleavage products remain tightly, albeit non-covalently, associated. Interacts with POU2F1, CREB3, ZBTB17, EGR2, E2F4, CREBZF, SP1, GABP2, Sin3 HDAC complex (SIN3A, HDAC1, HDAC2, SUDS3), SAP30, SIN3B and FHL2. Component of a MLL1 complex, composed of at least the core components KMT2A/MLL1, ASH2L, HCFC1, WDR5 and RBBP5, as well as the facultative components BACC1, CHD8, DPY30, E2F6, HCFC2, HSP70, INO80C, KANSL1, LAS1L, MAX, MCRS1, MEN1, MGA, KAT8, PELP1, PHF20, PRP31, RING2, RUVBL1, RUVBL2, SENP3, TAF1, TAF4, TAF6, TAF7, TAF9 and TEX10. Component of a THAP1/THAP3-HCFC1-OGT complex that is required for the regulation of the transcriptional activity of RRM1. Interacts directly with THAP3 (via its HBM). Interacts (via the Kelch-repeat domain) with THAP1 (via the HBM); the interaction recruits HCHC1 to the RRM1. Interacts with THAP7 and THAP11 (via the HMB). Interacts directly with OGT; the interaction, which requires the HCFC1 cleavage site domain, glycosylates and promotes the proteolytic processing of HCFC1, retains OGT in the nucleus and impacts the expression of herpes simplex virus immediate early viral genes. Component of the SET1 complex, at least composed of the catalytic subunit (SETD1A or SETD1B), WDR5, WDR82, RBBP5, ASH2L, CXXC1, HCFC1 and DPY30. Component of the NSL complex at least composed of MOF/KAT8, KANSL1, KANSL2, KANSL3, MCRS1, PHF20, OGT1/OGT, WDR5 and HCFC1. Component of a complex at least composed of ZNF335, HCFC1, CCAR2, EMSY, MKI67, RBBP5, ASH2L and WDR5; the complex is formed as a result of interactions between components of a nuclear receptor-mediated transcription complex and a histone methylation complex. Within the complex interacts with ZNF335. Interacts with TET2 and TET3. Interacts with HCFC1R1. Interacts with THAP11. Interacts (via Kelch domain) with KMT2E/MLL5 isoform 3 (via HBM motif). Interacts with E2F1. Accessory scaffold component of the polycomb repressive deubiquitinase (PR-DUB) complex, at least composed of BAP1, one of ASXL1, ASXL2 or (probably) ASXL3 and one of MBD5 or MBD6; the PR-DUB core associates with a number of accessory proteins, including FOXK1, FOXK2, KDM1B, HCFC1, YY1 and OGT. Interacts with YY1 (via Gly-rich region); the interaction is direct. Interacts with BAP1 (via HBM-like motif). In terms of processing, proteolytically cleaved at one or several PPCE--THET sites within the HCF repeats. Further cleavage of the primary N- and C-terminal chains results in a 'trimming' and accumulation of the smaller chains. Cleavage is promoted by O-glycosylation. O-glycosylated. GlcNAcylation by OGT promotes proteolytic processing. Post-translationally, ubiquitinated. Lys-1818 and Lys-1819 are ubiquitinated both via 'Lys-48'- and 'Lys-63'-linked polyubiquitin chains. BAP1 mediated deubiquitination of 'Lys-48'-linked polyubiquitin chains; deubiquitination by BAP1 does not seem to stabilize the protein.

The protein localises to the cytoplasm. Its subcellular location is the nucleus. Functionally, transcriptional coregulator. Serves as a scaffold protein, bridging interactions between transcription factors, including THAP11 and ZNF143, and transcriptional coregulators. Involved in control of the cell cycle. Also antagonizes transactivation by ZBTB17 and GABP2; represses ZBTB17 activation of the p15(INK4b) promoter and inhibits its ability to recruit p300. Coactivator for EGR2 and GABP2. Tethers the chromatin modifying Set1/Ash2 histone H3 'Lys-4' methyltransferase (H3K4me) and Sin3 histone deacetylase (HDAC) complexes (involved in the activation and repression of transcription, respectively) together. Component of a THAP1/THAP3-HCFC1-OGT complex that is required for the regulation of the transcriptional activity of RRM1. As part of the NSL complex it may be involved in acetylation of nucleosomal histone H4 on several lysine residues. Recruits KMT2E/MLL5 to E2F1 responsive promoters promoting transcriptional activation and thereby facilitates G1 to S phase transition. Modulates expression of homeobox protein PDX1, perhaps acting in concert with transcription factor E2F1, thereby regulating pancreatic beta-cell growth and glucose-stimulated insulin secretion. May negatively modulate transcriptional activity of FOXO3. The sequence is that of Host cell factor 1 from Rattus norvegicus (Rat).